A 482-amino-acid chain; its full sequence is MRYRPVIGLEIHVQLSTKTKAFCSCPADVFELPPNTAICPVCTGQPGALPVPNEEMIRFAVKTALALNCKIHKYSRFDRKNYFYPDLPKGYQISQYFYPIATEGFLEIDGDEGRKKVRIRRLHLEEDAGKLVHEGDSITRASYSLVDMNRCGVPLIEIVTEPDISSPREARVFMEKLRSIVRYLGVSTGDMEKGALRCDANISVVDTETGRQSNRVEVKNMNSFRFVEKALEYEFERIVKAMERGEDVERETRGWDMTTKTTVSMRGKEEESDYRYFPEPDIPPVVLSDEYLEEVKKELPELPDEKAKRFMREYDLPEYDAKVLTSSKELAEFFEECVKVVNRPKDLSNWIMTEVLRELNERNIEITESKLTPQHFADLFKLMDEGKISIKIAKEIFPEVFETGKMPSQIVEERGLVQINDEKLIEELVKKAMEQNPKAVEDYKAGKKKAAGFFVGFVMRETKGKANPELTNKIVQKLLEGE.

Belongs to the GatB/GatE family. GatB subfamily. In terms of assembly, heterotrimer of A, B and C subunits.

The enzyme catalyses L-glutamyl-tRNA(Gln) + L-glutamine + ATP + H2O = L-glutaminyl-tRNA(Gln) + L-glutamate + ADP + phosphate + H(+). It carries out the reaction L-aspartyl-tRNA(Asn) + L-glutamine + ATP + H2O = L-asparaginyl-tRNA(Asn) + L-glutamate + ADP + phosphate + 2 H(+). Its function is as follows. Allows the formation of correctly charged Asn-tRNA(Asn) or Gln-tRNA(Gln) through the transamidation of misacylated Asp-tRNA(Asn) or Glu-tRNA(Gln) in organisms which lack either or both of asparaginyl-tRNA or glutaminyl-tRNA synthetases. The reaction takes place in the presence of glutamine and ATP through an activated phospho-Asp-tRNA(Asn) or phospho-Glu-tRNA(Gln). The chain is Aspartyl/glutamyl-tRNA(Asn/Gln) amidotransferase subunit B from Thermotoga neapolitana (strain ATCC 49049 / DSM 4359 / NBRC 107923 / NS-E).